The chain runs to 68 residues: Putative membrane protein insertion efficiency factor (68 aa).

Belongs to the UPF0161 family.

The protein localises to the cell inner membrane. Its function is as follows. Could be involved in insertion of integral membrane proteins into the membrane. In Persephonella marina (strain DSM 14350 / EX-H1), this protein is Putative membrane protein insertion efficiency factor.